A 289-amino-acid polypeptide reads, in one-letter code: Ribosomal RNA small subunit methyltransferase A (289 aa).

Residues asparagine 28, leucine 30, glycine 55, glutamate 77, aspartate 103, and asparagine 122 each contribute to the S-adenosyl-L-methionine site.

The protein belongs to the class I-like SAM-binding methyltransferase superfamily. rRNA adenine N(6)-methyltransferase family. RsmA subfamily.

The protein localises to the cytoplasm. The catalysed reaction is adenosine(1518)/adenosine(1519) in 16S rRNA + 4 S-adenosyl-L-methionine = N(6)-dimethyladenosine(1518)/N(6)-dimethyladenosine(1519) in 16S rRNA + 4 S-adenosyl-L-homocysteine + 4 H(+). In terms of biological role, specifically dimethylates two adjacent adenosines (A1518 and A1519) in the loop of a conserved hairpin near the 3'-end of 16S rRNA in the 30S particle. May play a critical role in biogenesis of 30S subunits. In Jannaschia sp. (strain CCS1), this protein is Ribosomal RNA small subunit methyltransferase A.